The following is a 378-amino-acid chain: tRNA (guanine(26)-N(2))-dimethyltransferase (378 aa).

One can recognise a Trm1 methyltransferase domain in the interval 4–374 (KEVTEGKVRI…KGYEEIIRCV (371 aa)). Residues Arg44, Arg69, Asp87, Asp114, and Ala115 each coordinate S-adenosyl-L-methionine. Cys246, Cys249, Cys263, and Cys266 together coordinate Zn(2+).

The protein belongs to the class I-like SAM-binding methyltransferase superfamily. Trm1 family.

It carries out the reaction guanosine(26) in tRNA + 2 S-adenosyl-L-methionine = N(2)-dimethylguanosine(26) in tRNA + 2 S-adenosyl-L-homocysteine + 2 H(+). Dimethylates a single guanine residue at position 26 of a number of tRNAs using S-adenosyl-L-methionine as donor of the methyl groups. This Saccharolobus islandicus (strain M.14.25 / Kamchatka #1) (Sulfolobus islandicus) protein is tRNA (guanine(26)-N(2))-dimethyltransferase.